We begin with the raw amino-acid sequence, 55 residues long: MKKWQCVVCGLIYDEAKGWPEEGIEAGTRWEDVPEDWLCPDCGVGKLDFEMIEIG.

The Rubredoxin-like domain maps to 1–54 (MKKWQCVVCGLIYDEAKGWPEEGIEAGTRWEDVPEDWLCPDCGVGKLDFEMIEI). Positions 6, 9, 39, and 42 each coordinate Fe cation.

The protein belongs to the rubredoxin family. It depends on Fe(3+) as a cofactor.

The protein localises to the cytoplasm. It functions in the pathway hydrocarbon metabolism; alkane degradation. In terms of biological role, involved in the hydrocarbon hydroxylating system, which transfers electrons from NADH to rubredoxin reductase and then through rubredoxin to alkane 1 monooxygenase. This Pseudomonas aeruginosa (strain ATCC 15692 / DSM 22644 / CIP 104116 / JCM 14847 / LMG 12228 / 1C / PRS 101 / PAO1) protein is Rubredoxin-1 (rubA1).